We begin with the raw amino-acid sequence, 224 residues long: Flagellar L-ring protein (224 aa).

The N-terminal stretch at 1 to 15 (MARYFILAVALLLTA) is a signal peptide. The N-palmitoyl cysteine moiety is linked to residue Cys-16. Cys-16 carries the S-diacylglycerol cysteine lipid modification.

It belongs to the FlgH family. As to quaternary structure, the basal body constitutes a major portion of the flagellar organelle and consists of four rings (L,P,S, and M) mounted on a central rod.

The protein localises to the cell outer membrane. The protein resides in the bacterial flagellum basal body. Its function is as follows. Assembles around the rod to form the L-ring and probably protects the motor/basal body from shearing forces during rotation. In Shewanella sp. (strain MR-7), this protein is Flagellar L-ring protein.